The primary structure comprises 734 residues: Polyribonucleotide nucleotidyltransferase (734 aa).

Mg(2+) is bound by residues Asp503 and Asp509. Positions 570 to 629 (PKLSTIQVPVDAIGMIIGKGGETIRSITEETGAQINVDDDGTVTISSPNGESAAAAIETI) constitute a KH domain. In terms of domain architecture, S1 motif spans 639 to 713 (GTIYMGKVKD…GKIRYALSIK (75 aa)).

This sequence belongs to the polyribonucleotide nucleotidyltransferase family. Requires Mg(2+) as cofactor.

The protein resides in the cytoplasm. The catalysed reaction is RNA(n+1) + phosphate = RNA(n) + a ribonucleoside 5'-diphosphate. Functionally, involved in mRNA degradation. Catalyzes the phosphorolysis of single-stranded polyribonucleotides processively in the 3'- to 5'-direction. The chain is Polyribonucleotide nucleotidyltransferase from Chlorobium phaeobacteroides (strain BS1).